Reading from the N-terminus, the 280-residue chain is 4-diphosphocytidyl-2-C-methyl-D-erythritol kinase (280 aa).

Lys11 is a catalytic residue. Residue Pro95–Ser105 participates in ATP binding. Asp137 is an active-site residue.

Belongs to the GHMP kinase family. IspE subfamily.

It carries out the reaction 4-CDP-2-C-methyl-D-erythritol + ATP = 4-CDP-2-C-methyl-D-erythritol 2-phosphate + ADP + H(+). It participates in isoprenoid biosynthesis; isopentenyl diphosphate biosynthesis via DXP pathway; isopentenyl diphosphate from 1-deoxy-D-xylulose 5-phosphate: step 3/6. Catalyzes the phosphorylation of the position 2 hydroxy group of 4-diphosphocytidyl-2C-methyl-D-erythritol. The chain is 4-diphosphocytidyl-2-C-methyl-D-erythritol kinase from Pelobacter propionicus (strain DSM 2379 / NBRC 103807 / OttBd1).